Consider the following 37-residue polypeptide: Large ribosomal subunit protein bL36 (37 aa).

It belongs to the bacterial ribosomal protein bL36 family.

In Salinispora arenicola (strain CNS-205), this protein is Large ribosomal subunit protein bL36.